A 69-amino-acid polypeptide reads, in one-letter code: Large ribosomal subunit protein bL31 (69 aa).

Zn(2+) contacts are provided by C16, C18, C38, and C41.

The protein belongs to the bacterial ribosomal protein bL31 family. Type A subfamily. In terms of assembly, part of the 50S ribosomal subunit. Zn(2+) serves as cofactor.

Binds the 23S rRNA. This is Large ribosomal subunit protein bL31 from Cutibacterium acnes (strain DSM 16379 / KPA171202) (Propionibacterium acnes).